The primary structure comprises 356 residues: Tyrosine recombinase XerS (356 aa).

The Core-binding (CB) domain occupies 16 to 121; it reads LMPWFVLEYY…ALSCLYKYLT (106 aa). The region spanning 169–354 is the Tyr recombinase domain; sequence KFLDYVENEY…VNDEQKNALD (186 aa). Active-site residues include Arg210, Lys234, His306, Arg309, and His332. The O-(3'-phospho-DNA)-tyrosine intermediate role is filled by Tyr341.

It belongs to the 'phage' integrase family. XerS subfamily.

It is found in the cytoplasm. FtsK is required for recombination. Its function is as follows. Site-specific tyrosine recombinase, which acts by catalyzing the cutting and rejoining of the recombining DNA molecules. Essential to convert dimers of the bacterial chromosome into monomers to permit their segregation at cell division. The chain is Tyrosine recombinase XerS from Streptococcus thermophilus (strain ATCC BAA-250 / LMG 18311).